Reading from the N-terminus, the 363-residue chain is NADH-quinone oxidoreductase subunit H (363 aa).

10 helical membrane-spanning segments follow: residues 29–49, 62–82, 96–116, 127–147, 163–183, 202–222, 238–257, 278–298, 299–319, and 339–359; these read VLKILLIAVPVIVSVAFYVVW, GPMYVGMGIFQAFADVFKLLF, FIIAPLLTLAPAFAAWSVVPF, VGLLYLLAMTSLGVYGIILAG, AAQVVSYEIAMGFALVGVMIA, FFDWFLIPLFPLFIVYWVSGV, EIVAGHMVEYSGGAFALFFL, WLSPIQGWVNADISPWIDWLW, KGGWPWLLMKVFFFASAYIWF, and FIPLTIVWIAVTALMVFYGVI.

It belongs to the complex I subunit 1 family. As to quaternary structure, NDH-1 is composed of 14 different subunits. Subunits NuoA, H, J, K, L, M, N constitute the membrane sector of the complex.

The protein localises to the cell inner membrane. The catalysed reaction is a quinone + NADH + 5 H(+)(in) = a quinol + NAD(+) + 4 H(+)(out). In terms of biological role, NDH-1 shuttles electrons from NADH, via FMN and iron-sulfur (Fe-S) centers, to quinones in the respiratory chain. The immediate electron acceptor for the enzyme in this species is believed to be ubiquinone. Couples the redox reaction to proton translocation (for every two electrons transferred, four hydrogen ions are translocated across the cytoplasmic membrane), and thus conserves the redox energy in a proton gradient. This subunit may bind ubiquinone. The sequence is that of NADH-quinone oxidoreductase subunit H from Xanthomonas oryzae pv. oryzae (strain MAFF 311018).